The primary structure comprises 209 residues: Large ribosomal subunit protein uL3 (209 aa).

Residues 128 to 163 are disordered; that stretch reads FGGGSRTHGQSDRLRAPGSVGGSSDPSRTFRGTRMA.

Belongs to the universal ribosomal protein uL3 family. Part of the 50S ribosomal subunit. Forms a cluster with proteins L14 and L19.

In terms of biological role, one of the primary rRNA binding proteins, it binds directly near the 3'-end of the 23S rRNA, where it nucleates assembly of the 50S subunit. This is Large ribosomal subunit protein uL3 from Chlorobium phaeobacteroides (strain DSM 266 / SMG 266 / 2430).